The primary structure comprises 345 residues: Biotin synthase (345 aa).

Residues 67–295 (YKVQLASLLS…KSRIRLSAGR (229 aa)) enclose the Radical SAM core domain. Residues Cys-82, Cys-86, and Cys-89 each coordinate [4Fe-4S] cluster. [2Fe-2S] cluster contacts are provided by Cys-126, Cys-158, Cys-218, and Arg-290.

Belongs to the radical SAM superfamily. Biotin synthase family. Homodimer. Requires [4Fe-4S] cluster as cofactor. The cofactor is [2Fe-2S] cluster.

It catalyses the reaction (4R,5S)-dethiobiotin + (sulfur carrier)-SH + 2 reduced [2Fe-2S]-[ferredoxin] + 2 S-adenosyl-L-methionine = (sulfur carrier)-H + biotin + 2 5'-deoxyadenosine + 2 L-methionine + 2 oxidized [2Fe-2S]-[ferredoxin]. It functions in the pathway cofactor biosynthesis; biotin biosynthesis; biotin from 7,8-diaminononanoate: step 2/2. Functionally, catalyzes the conversion of dethiobiotin (DTB) to biotin by the insertion of a sulfur atom into dethiobiotin via a radical-based mechanism. This Prochlorococcus marinus (strain NATL1A) protein is Biotin synthase.